The following is a 407-amino-acid chain: MSQNESGTIAIPMYDKDDAVLVLEDGQVYVGKPYGALGETTGEIVFATGMTGYQETLTDPSYDRQIVVQTFPHIGDTGVNSEDPESSRIWVAGYIVRDPSPNVSNWRAEGSLDDDLAKNGIVGLSHIDTRKLVRHLRSAGVMRAGIFSGDALTDQATGALKTIEQLLEDVKNTPQMQGLSLYDEVSTKETYTIEPCGEYEGKEPLYTVAAVDLGIKGMTPHRMAERGCRVHVVPSTITFAEIENLNPDGVFFSNGPGDPEQAGPEIELLRQVLDAGYPFFGICFGNQLLGRALGFGTYKLKFGHRGINQPVKDLTTGKVEVTAHNHGFAVDAPIGKQVDAPFENGKYGKVFVSHIDLNDDVVEGLQCVDIPAFSVQYHPEAAAGPHDAAYLFDRFCELMKNNSKEGK.

The CPSase stretch occupies residues Met-1–Glu-203. Positions 61, 255, and 257 each coordinate L-glutamine. In terms of domain architecture, Glutamine amidotransferase type-1 spans Thr-207 to Glu-405. Residue Cys-283 is the Nucleophile of the active site. Positions 284, 287, 325, 327, and 328 each coordinate L-glutamine. Catalysis depends on residues His-378 and Glu-380.

It belongs to the CarA family. Composed of two chains; the small (or glutamine) chain promotes the hydrolysis of glutamine to ammonia, which is used by the large (or ammonia) chain to synthesize carbamoyl phosphate. Tetramer of heterodimers (alpha,beta)4.

It carries out the reaction hydrogencarbonate + L-glutamine + 2 ATP + H2O = carbamoyl phosphate + L-glutamate + 2 ADP + phosphate + 2 H(+). The enzyme catalyses L-glutamine + H2O = L-glutamate + NH4(+). Its pathway is amino-acid biosynthesis; L-arginine biosynthesis; carbamoyl phosphate from bicarbonate: step 1/1. It participates in pyrimidine metabolism; UMP biosynthesis via de novo pathway; (S)-dihydroorotate from bicarbonate: step 1/3. In terms of biological role, small subunit of the glutamine-dependent carbamoyl phosphate synthetase (CPSase). CPSase catalyzes the formation of carbamoyl phosphate from the ammonia moiety of glutamine, carbonate, and phosphate donated by ATP, constituting the first step of 2 biosynthetic pathways, one leading to arginine and/or urea and the other to pyrimidine nucleotides. The small subunit (glutamine amidotransferase) binds and cleaves glutamine to supply the large subunit with the substrate ammonia. The protein is Carbamoyl phosphate synthase small chain of Bifidobacterium longum (strain NCC 2705).